The primary structure comprises 346 residues: tRNA N6-adenosine threonylcarbamoyltransferase (346 aa).

The a divalent metal cation site is built by H117, H121, and Y138. Residues 138-142, D170, G185, and N277 each bind substrate; that span reads YVSGG. Residue D305 participates in a divalent metal cation binding.

Belongs to the KAE1 / TsaD family. In terms of assembly, component of the EKC/KEOPS complex composed of at least SPAP27G11.07c/BUD32, cgi121, gon7, pgp2 and SPAC4H3.13/PCC1; the whole complex dimerizes. A divalent metal cation serves as cofactor.

The protein localises to the cytoplasm. It localises to the nucleus. The catalysed reaction is L-threonylcarbamoyladenylate + adenosine(37) in tRNA = N(6)-L-threonylcarbamoyladenosine(37) in tRNA + AMP + H(+). In terms of biological role, component of the EKC/KEOPS complex that is required for the formation of a threonylcarbamoyl group on adenosine at position 37 (t(6)A37) in tRNAs that read codons beginning with adenine. The complex is probably involved in the transfer of the threonylcarbamoyl moiety of threonylcarbamoyl-AMP (TC-AMP) to the N6 group of A37. Pgp2 likely plays a direct catalytic role in this reaction, but requires other protein(s) of the complex to fulfill this activity. The EKC/KEOPS complex also promotes both telomere uncapping and telomere elongation. The complex is required for efficient recruitment of transcriptional coactivators. This is tRNA N6-adenosine threonylcarbamoyltransferase (pgp2) from Schizosaccharomyces pombe (strain 972 / ATCC 24843) (Fission yeast).